We begin with the raw amino-acid sequence, 426 residues long: Glutamate/glutamine/aspartate/asparagine transport system permease protein BztB (426 aa).

The next 8 membrane-spanning stretches (helical) occupy residues 25-45, 96-116, 132-152, 211-231, 252-272, 293-313, 340-360, and 396-416; these read SITIQIVVLLLFLAGLVWLLN, LLVSVLGCILATILGTIIGVL, VETFRNIPLLLWILLMGTILA, LPVSLNALAILAVMSASFWGW, WWPSLLILFAPISALLYGLGF, SFTALLIALTLYTAAFIAEIV, SLVILPQALRVIVPPLISQFL, and MLLMMLIYLTISLTISSLMNL. In terms of domain architecture, ABC transmembrane type-1 spans 92–414; it reads LLNTLLVSVL…TISLTISSLM (323 aa).

It belongs to the binding-protein-dependent transport system permease family. HisMQ subfamily. In terms of assembly, bztB and BztC form a heterodimer which can form a membrane complex with a homodimer of BztD.

The protein resides in the cell inner membrane. In terms of biological role, part of a binding-protein-dependent transport system for glutamate, glutamine, aspartate and asparagine. Probably responsible for the translocation of the substrate across the membrane. The sequence is that of Glutamate/glutamine/aspartate/asparagine transport system permease protein BztB (bztB) from Rhodobacter capsulatus (strain ATCC BAA-309 / NBRC 16581 / SB1003).